The following is a 428-amino-acid chain: Sialidase-3 (428 aa).

Residues 24-27 carry the FRIP motif motif; sequence YRIP. Positions 25 and 45 each coordinate substrate. The active-site Proton acceptor is Asp-50. One copy of the BNR 1 repeat lies at 129–140; the sequence is ICSQDAGYSWSD. The substrate site is built by Tyr-179 and Tyr-181. The BNR 2 repeat unit spans residues 203 to 214; it reads IYSDDLGATWHH. Positions 225 and 245 each coordinate substrate. One copy of the BNR 3 repeat lies at 254 to 265; it reads ALSIDHGECFQK. The residue at position 314 (Ser-314) is a Phosphoserine. Arg-341 is a binding site for substrate. Tyr-371 (nucleophile) is an active-site residue. Glu-388 is an active-site residue.

This sequence belongs to the glycosyl hydrolase 33 family. In terms of assembly, interacts with CAV1; this interaction enhances NEU3 sialidase activity within caveola. Interacts with EGFR; this interaction mediates desialylation of EGFR and enhances downstream signaling. Post-translationally, palmitoylated; may regulate intracellular trafficking and anchorage to plasma membrane and endomembranes. In terms of tissue distribution, expressed in brain.

The protein localises to the cell membrane. It is found in the membrane. The protein resides in the caveola. It localises to the early endosome membrane. Its subcellular location is the recycling endosome membrane. The protein localises to the lysosome membrane. The catalysed reaction is Hydrolysis of alpha-(2-&gt;3)-, alpha-(2-&gt;6)-, alpha-(2-&gt;8)- glycosidic linkages of terminal sialic acid residues in oligosaccharides, glycoproteins, glycolipids, colominic acid and synthetic substrates.. It carries out the reaction a ganglioside GD1a + H2O = a ganglioside GM1 + N-acetylneuraminate. It catalyses the reaction a ganglioside GD1a (d18:1(4E)) + H2O = a ganglioside GM1 (d18:1(4E)) + N-acetylneuraminate. The enzyme catalyses a ganglioside GD1b + H2O = a ganglioside GM1 + N-acetylneuraminate. The catalysed reaction is a ganglioside GD1b (d18:1(4E)) + H2O = a ganglioside GM1 (d18:1(4E)) + N-acetylneuraminate. It carries out the reaction a ganglioside GD3 + H2O = a ganglioside GM3 + N-acetylneuraminate. It catalyses the reaction a ganglioside GD3 (d18:1(4E)) + H2O = a ganglioside GM3 (d18:1(4E)) + N-acetylneuraminate. The enzyme catalyses a ganglioside GM3 + H2O = a beta-D-galactosyl-(1-&gt;4)-beta-D-glucosyl-(1&lt;-&gt;1)-ceramide + N-acetylneuraminate. The catalysed reaction is a ganglioside GM1 + H2O = a ganglioside GA1 + N-acetylneuraminate. It carries out the reaction a ganglioside GM1 (d18:1(4E)) + H2O = a ganglioside GA1 (d18:1(4E)) + N-acetylneuraminate. It catalyses the reaction a ganglioside GM2 (d18:1(4E)) + H2O = a ganglioside GA2 (d18:1(4E)) + N-acetylneuraminate. The enzyme catalyses a ganglioside GM3 (d18:1(4E)) + H2O = a beta-D-Gal-(1-&gt;4)-beta-D-Glc-(1&lt;-&gt;1)-Cer(d18:1(4E)) + N-acetylneuraminate. The catalysed reaction is a ganglioside GT1b + H2O = a ganglioside GD1b + N-acetylneuraminate. Exo-alpha-sialidase that catalyzes the hydrolytic cleavage of the terminal sialic acid (N-acetylneuraminic acid, Neu5Ac) of a glycan moiety in the catabolism of glycolipids, glycoproteins and oligosacharides. Displays high catalytic efficiency for gangliosides including alpha-(2-&gt;3)-sialylated GD1a and GM3 and alpha-(2-&gt;8)-sialylated GD3. Plays a role in the regulation of transmembrane signaling through the modulation of ganglioside content of the lipid bilayer and by direct interaction with signaling receptors, such as EGFR. Desialylates EGFR and activates downstream signaling in proliferating cells. Contributes to clathrin-mediated endocytosis by regulating sorting of endocytosed receptors to early and recycling endosomes. In Bos taurus (Bovine), this protein is Sialidase-3 (NEU3).